Reading from the N-terminus, the 321-residue chain is uncharacterized protein (321 aa).

This is an uncharacterized protein from Acanthamoeba polyphaga mimivirus (APMV).